We begin with the raw amino-acid sequence, 600 residues long: Proline--tRNA ligase (600 aa).

The protein belongs to the class-II aminoacyl-tRNA synthetase family. ProS type 1 subfamily. As to quaternary structure, homodimer.

The protein resides in the cytoplasm. It catalyses the reaction tRNA(Pro) + L-proline + ATP = L-prolyl-tRNA(Pro) + AMP + diphosphate. In terms of biological role, catalyzes the attachment of proline to tRNA(Pro) in a two-step reaction: proline is first activated by ATP to form Pro-AMP and then transferred to the acceptor end of tRNA(Pro). As ProRS can inadvertently accommodate and process non-cognate amino acids such as alanine and cysteine, to avoid such errors it has two additional distinct editing activities against alanine. One activity is designated as 'pretransfer' editing and involves the tRNA(Pro)-independent hydrolysis of activated Ala-AMP. The other activity is designated 'posttransfer' editing and involves deacylation of mischarged Ala-tRNA(Pro). The misacylated Cys-tRNA(Pro) is not edited by ProRS. The sequence is that of Proline--tRNA ligase from Gloeothece citriformis (strain PCC 7424) (Cyanothece sp. (strain PCC 7424)).